The following is a 309-amino-acid chain: Probable manganese-dependent inorganic pyrophosphatase (309 aa).

The Mn(2+) site is built by His-9, Asp-13, Asp-15, Asp-75, His-97, and Asp-149.

It belongs to the PPase class C family. The cofactor is Mn(2+).

It localises to the cytoplasm. The enzyme catalyses diphosphate + H2O = 2 phosphate + H(+). The chain is Probable manganese-dependent inorganic pyrophosphatase from Staphylococcus aureus (strain COL).